Reading from the N-terminus, the 393-residue chain is Sulfate adenylyltransferase (393 aa).

It belongs to the sulfate adenylyltransferase family.

The enzyme catalyses sulfate + ATP + H(+) = adenosine 5'-phosphosulfate + diphosphate. It functions in the pathway sulfur metabolism; hydrogen sulfide biosynthesis; sulfite from sulfate: step 1/3. This Synechococcus sp. (strain JA-3-3Ab) (Cyanobacteria bacterium Yellowstone A-Prime) protein is Sulfate adenylyltransferase.